A 387-amino-acid chain; its full sequence is Methyltransferase phomM' (387 aa).

The tract at residues 98–223 (PHRPKDLHIL…QSVADLFTTL (126 aa)) is methyltransferase domain.

The protein belongs to the class I-like SAM-binding methyltransferase superfamily. Erg6/SMT family.

The protein operates within mycotoxin biosynthesis. Functionally, methyltransferase; part of the gene cluster that mediates the biosynthesis of the phomopsins, a group of hexapeptide mycotoxins which infects lupins and causes lupinosis disease in livestock. Within the pathway, phomM' acts as an S-adenosylmethionine-dependent alpha-N-methyltransferase that catalyzes two successive N-methylation reactions, converting N-desmethyl-phomopsin A to phomopsin A and phomopsin A further to an N,N-dimethylated congener called phomopsin E. The pathway starts with the processing of the precursor phomA' by several endopeptidases including kexin proteases as well as the cluster-specific S41 family peptidase phomP1 and the oligopeptidase phomG' to produce 10 identical copies of the hexapeptide Tyr-Val-Ile-Pro-Ile-Asp. After being excised from the precursor peptide, the core peptides are cyclized and modified post-translationally by enzymes encoded within the gene cluster. The timing and order of proteolysis of the phomA' precursor and PTMs are still unknown. Two tyrosinase-like enzymes, phomQ1' and phomQ2, catalyze the chlorination and hydroxylation of Tyr, respectively. PhomYb, is proposed to be involved in the construction of the macrocyclic structure. The other 4 ustYa family proteins may be involved in PTMs that generate the unique structure of phomopsin A. PhomYa' is required for the hydroxylation of C-beta of Tyr. PhomYc', phomYd', and phomYe are responsible for the biosynthesis of 2,3-dehydroisoleucine (dIle), 2,3-dehydroaspartic acid (dAsp), and 3,4-dehydroproline (dPro), respectively. While dIle formation by phomYc' is indispensable for the installation of dAsp by phomYd', the order of the other PTMs have not been elucidated yet. Most of the biosynthetic enzymes likely have broad substrate specificity, and thus, there might be a metabolic grid from a precursor to phomopsin A. The enzyme(s) responsible for the biosynthesis of 3,4-dehydrovaline (dVal) have also not been identified yet. Finally, phomM' acts as an S-adenosylmethionine-dependent alpha-N-methyltransferase that catalyzes two successive N-methylation reactions, converting N-desmethyl-phomopsin A to phomopsin A and phomopsin A further to an N,N-dimethylated congener called phomopsin E. The protein is Methyltransferase phomM' of Diaporthe leptostromiformis (Lupinosis disease fungus).